The sequence spans 378 residues: Stimulator of interferon genes protein (378 aa).

At 1-17 the chain is on the cytoplasmic side; that stretch reads MPYSNLHPAIPRPRGHR. Positions 1 to 189 are mediates interaction with ZDHHC1 and ZDHHC11; it reads MPYSNLHPAI…MFNQLHNNML (189 aa). Residues 18-34 traverse the membrane as a helical segment; that stretch reads SKYVALIFLVASLMILW. A Glycyl lysine isopeptide (Lys-Gly) (interchain with G-Cter in ubiquitin) cross-link involves residue K19. Topologically, residues 35–44 are lumenal; the sequence is VAKDPPNHTL. The chain crosses the membrane as a helical span at residues 45-69; the sequence is KYLALHLASHELGLLLKNLCCLAEE. Residues 70–91 lie on the Cytoplasmic side of the membrane; the sequence is LCHVQSRYQGSYWKAVRACLGC. 2 S-palmitoyl cysteine lipidation sites follow: C88 and C91. Residues 92–106 traverse the membrane as a helical segment; the sequence is PIHCMAMILLSSYFY. Residues 107-115 lie on the Lumenal side of the membrane; that stretch reads FLQNTADIY. Residues 116-133 form a helical membrane-spanning segment; the sequence is LSWMFGLLVLYKSLSMLL. Residues 134-378 are Cytoplasmic-facing; sequence GLQSLTPAEV…QPLPLRTDLI (245 aa). Residue K150 forms a Glycyl lysine isopeptide (Lys-Gly) (interchain with G-Cter in ubiquitin) linkage. Positions 152–339 are cyclic dinucleotide-binding domain (CBD); sequence LNVAHGLAWS…RHIRQEEKEE (188 aa). Residue G165 participates in 3',3'-c-di-GMP binding. Y166 lines the 2',3'-cUAMP pocket. Y166 is a binding site for 3',3'-cGAMP. Residue K235 forms a Glycyl lysine isopeptide (Lys-Gly) (interchain with G-Cter in ubiquitin) linkage. Residue R237 coordinates 2',3'-cUAMP. R237 is a binding site for 3',3'-cGAMP. Residue R237 coordinates 2',3'-cGAMP. 3',3'-c-di-GMP-binding positions include 237 to 240 and T262; that span reads RVYS. Position 240 is a phosphoserine (S240). T262 serves as a coordination point for 2',3'-cUAMP. Residue T262 participates in 2',3'-cGAMP binding. K337 is covalently cross-linked (Glycyl lysine isopeptide (Lys-Gly) (interchain with G-Cter in SUMO)). Residues 339 to 378 are C-terminal tail (CTT); the sequence is EVTMNAPMTSVAPPPSVLSQEPRLLISGMDQPLPLRTDLI. At S354 the chain carries Phosphoserine; by MAP3K7. 2 positions are modified to phosphoserine; by TBK1: S357 and S365. A pLxIS motif motif is present at residues 362-365; it reads LLIS.

The protein belongs to the STING family. Homodimer; forms a homodimer in absence of cyclic nucleotide (c-di-GMP or cGAMP); 'Lys-63'-linked ubiquitination at Lys-150 is required for homodimerization. Homotetramer; in presence of cyclic nucleotide (c-di-GMP or cGAMP), forms tetramers and higher-order oligomers through side-by-side packing. Interacts (when phosphorylated) with IRF3; following activation and phosphorylation on the pLxIS motif by TBK1, recruits IRF3. Interacts with RIGI, MAVS and SSR2. Interacts with RNF5 and TRIM56. Interacts with TBK1; when homodimer, leading to subsequent production of IFN-beta. Interacts with IFIT1 and IFIT2. Interacts with TRIM29; this interaction induces STING1 ubiquitination and subsequent degradation. Associates with the MHC-II complex. Interacts with STEEP1; interaction takes place upon cGAMP-activation and STING1 phosphorylation by MAP3K7/TAK1 and promotes STING1 translocation to COPII vesicles. Interacts with SEC24A, SEC24B and SEC24C; promoting translocation to COPII vesicles. Interacts (when ubiquitinated) with SQSTM1; leading to relocalization to autophagosomes. Interacts with SURF4. Interacts with HNRNPA2B1. Interacts with ZDHHC1; ZDHHC1 constitutively interacts with STING1 and in presence of DNA viruses activates it by promoting its cGAMP-induced oligomerization and the recruitment of downstream signaling components. Interacts with ZDHHC11; in presence of DNA viruses promotes the recruitment of IRF3 to STING1. Interacts with TOMM70. Interacts with IFI204. Interacts with TAB1; promoting recruitment of TAB1 to the endoplasmic reticulum membrane and subsequent activation of MAP3K7/TAK1. Interacts (via transmembrane domain) with TMEM203. Interacts with DDX41. Post-translationally, phosphorylation by TBK1 leads to activation and production of IFN-beta. Following cyclic nucleotide (c-di-GMP or cGAMP)-binding, activation and translocation from the endoplasmic reticulum, STING1 is phosphorylated by TBK1 at Ser-365 in the pLxIS motif. The phosphorylated pLxIS motif constitutes an IRF3-binding motif, leading to recruitment of the transcription factor IRF3 to induce type-I interferons and other cytokines. The phosphorylated pLxIS motif facilitates SENP2 recruitment during late phase of viral infection. Phosphorylated on tyrosine residues upon MHC-II aggregation. Dephosphorylation by PPP6C leads to inactivation and decreased production of IFN-beta. Phosphorylation at Ser-357 is also required to activate IRF3. Phosphorylation at Ser-354 by MAP3K7/TAK1 facilitates its interaction with STEEP1, promoting STING1 translocation to COPII vesicles. Ubiquitinated. Ubiquitinated via 'Lys-63'-linked ubiquitin chains in response to double-stranded DNA treatment, leading to relocalization to autophagosomes and subsequent degradation; this process is dependent on SQSTM1. 'Lys-63'-linked ubiquitination mediated by TRIM56 at Lys-150 promotes homodimerization and recruitment of the antiviral kinase TBK1 and subsequent production of IFN-beta. 'Lys-48'-linked polyubiquitination at Lys-150 occurring after viral infection is mediated by RNF5 and leads to proteasomal degradation. 'Lys-11'-linked polyubiquitination at Lys-150 by RNF26 leads to stabilize STING1: it protects STING1 from RNF5-mediated 'Lys-48'-linked polyubiquitination. 'Lys-33'-linked and 'Lys-48'-linked deubiquitinated by USP20; leading to its stabilization and promotion of innate antiviral response. 'Lys-48'-linked deubiquitinated by USP44; leading to its stabilization and promotion of innate antiviral response. Deubiquitinated by USP13; leading to inhibition of innate antiviral response. 'Lys-63'-linked deubiquitinated by USP49; leading to inhibition of the subsequent recruitment of TBK1 to the signaling complex. 'Lys-63'-linked ubiquitination mediated by RNF39 promotes the activation of the cGAS-STING pathway. MARCHF5-mediated ubiquitination prevents the oxidation-induced polymer formation. In terms of processing, sumoylated at Lys-337 by TRIM38 during the early phase of viral infection, promoting its stability by preventing its relocalization to autophagosomes and subsequent degradation. Desumoylated by SENP2 during the late phase of viral infection. Post-translationally, palmitoylation takes place in the Golgi apparatus and creates a platform for the recruitment of TBK1. In terms of tissue distribution, present in spleen and thymus tissue. Also present in dendritic cells (at protein level).

Its subcellular location is the endoplasmic reticulum membrane. It is found in the cytoplasm. It localises to the perinuclear region. The protein localises to the endoplasmic reticulum-Golgi intermediate compartment membrane. The protein resides in the golgi apparatus membrane. Its subcellular location is the cytoplasmic vesicle. It is found in the autophagosome membrane. It localises to the mitochondrion outer membrane. The protein localises to the cell membrane. The protein resides in the lysosome membrane. It carries out the reaction H(+)(in) = H(+)(out). With respect to regulation, activated by anticancer drug 5,6-dimethylxanthenone 4-acetic acid (DMXAA). Specifically inhibited by nitrofuran derivatives C-178 and C-176, which covalently bind Cys-91 and prevent palmitoylation and subsequent activation od STING1. Facilitator of innate immune signaling that acts as a sensor of cytosolic DNA from bacteria and viruses and promotes the production of type I interferon (IFN-alpha and IFN-beta). Innate immune response is triggered in response to non-CpG double-stranded DNA from viruses and bacteria delivered to the cytoplasm. Acts by binding cyclic dinucleotides: recognizes and binds cyclic di-GMP (c-di-GMP), a second messenger produced by bacteria, cyclic UMP-AMP (2',3'-cUAMP), and cyclic GMP-AMP (cGAMP), a messenger produced by CGAS in response to DNA virus in the cytosol. Upon binding to c-di-GMP, cUAMP or cGAMP, STING1 oligomerizes, translocates from the endoplasmic reticulum and is phosphorylated by TBK1 on the pLxIS motif, leading to recruitment and subsequent activation of the transcription factor IRF3 to induce expression of type I interferon and exert a potent anti-viral state. Exhibits 2',3' phosphodiester linkage-specific ligand recognition: can bind both 2'-3' linked cGAMP (2'-3'-cGAMP) and 3'-3' linked cGAMP but is preferentially activated by 2'-3' linked cGAMP. The preference for 2'-3'-cGAMP, compared to other linkage isomers is probably due to the ligand itself, whichs adopts an organized free-ligand conformation that resembles the STING1-bound conformation and pays low energy costs in changing into the active conformation. In addition to promote the production of type I interferons, plays a direct role in autophagy. Following cGAMP-binding, STING1 buds from the endoplasmic reticulum into COPII vesicles, which then form the endoplasmic reticulum-Golgi intermediate compartment (ERGIC). The ERGIC serves as the membrane source for WIPI2 recruitment and LC3 lipidation, leading to formation of autophagosomes that target cytosolic DNA or DNA viruses for degradation by the lysosome. Promotes autophagy by acting as a proton channel that directs proton efflux from the Golgi to facilitate MAP1LC3B/LC3B lipidation. The autophagy- and interferon-inducing activities can be uncoupled and autophagy induction is independent of TBK1 phosphorylation. Autophagy is also triggered upon infection by bacteria: following c-di-GMP-binding, which is produced by live Gram-positive bacteria, promotes reticulophagy. May be involved in translocon function, the translocon possibly being able to influence the induction of type I interferons. May be involved in transduction of apoptotic signals via its association with the major histocompatibility complex class II (MHC-II). The protein is Stimulator of interferon genes protein of Mus musculus (Mouse).